We begin with the raw amino-acid sequence, 107 residues long: MDVIVKMLILRKFVEQGNVCPIHLCVDIYKRAFPRSVNKGRSSYARRRRALELGRCHRCYRVYPPLFPEISRCDNRTCVPGISYNSKVRDYILWGVTEVIPHPGYNF.

Residues 46-49 are basic; that stretch reads RRRR. A C4-type zinc finger spans residues 56–78; that stretch reads CHRCYRVYPPLFPEISRCDNRTC.

This sequence belongs to the carlaviruses nucleic acid-binding protein family.

Functionally, suppressor of viral-induced RNA silencing. The potential mechanism of action is based on sequestering siRNAs. The sequence is that of RNA silencing suppressor from Chrysanthemum morifolium (Florist's daisy).